Here is a 512-residue protein sequence, read N- to C-terminus: MGGTQNGKAVANGKAKNGNITEKVIKLDPCPKPAFYVFWLVQLNITMMLVGAMVATLFDKWGIVKTKRSKGDPRMESFQPLGNSFDATYTDHIYRQSTDVVNRPISGVPGAIVRLKDRYTDDHGWTQKYTGTESEVINLGSYNYLGFSHRSGVCAEAAAAHIDKYGINCGGSRQEIGNHVAHKSVESTIAQYLNVEDAIVFPMGFATNSMNIPSLVDKGSLILSDRLNHASLVTGCRLSGAHTVVFRHNDASDCERKLRDALCGVSPKTGEKYNKVLIIIEGIYSMEGTIVNLPAFIAVKKKYNCYLFLDEAHSIGAVGPSGRGVAEYWGCNPRDIDIMMGTLTKSFASAGGYMGGSKKVIDHIRRYSAGTCYGVTMSPPLIAQVERAVLIMSGKDGTDIGRQKAIQLLENSRYFRKELRKRGFLVYGNNDSPVVPLMTFYITKVVEFSRRMLKHNIGIVAVGYPATPLLEARVRFCLSADHTKEHLDYILEAVEQVGMETGTFYGTKIVDE.

Lys345 is modified (N6-(pyridoxal phosphate)lysine).

It belongs to the class-II pyridoxal-phosphate-dependent aminotransferase family. Heterodimer of sptl-1/sptl-3. Pyridoxal 5'-phosphate is required as a cofactor.

It carries out the reaction L-serine + hexadecanoyl-CoA + H(+) = 3-oxosphinganine + CO2 + CoA. Its pathway is lipid metabolism; sphingolipid metabolism. Component of the serine palmitoyltransferase (SPT) that catalyzes the first committed step in sphingolipid biosynthesis, which is the condensation of an acyl-CoA species and L-serine. The catalytic core is composed of a heterodimer of sptl-1 and sptl-2 or sptl-1 and sptl-3. Required for the specification of abicobasal polarity and development of the gut lumen. In Caenorhabditis elegans, this protein is Serine palmitoyltransferase 3 (sptl-3).